We begin with the raw amino-acid sequence, 179 residues long: MRTIRPEKQQAVAELKEALQNAKSVVLADNLGLTVAQVTQLRRELRQAGVELKVAKNTLIGIAARELGIEGLEPYLHGTTTLAFSYEDEAAGAKKIREFFAKEREPKFVMKAGILEGKVIDADGVKALADLPNRETLLAQVLAGIQAPLQGVAGAINGLLASFAYALDARIRQLEGAEA.

Belongs to the universal ribosomal protein uL10 family. As to quaternary structure, part of the ribosomal stalk of the 50S ribosomal subunit. The N-terminus interacts with L11 and the large rRNA to form the base of the stalk. The C-terminus forms an elongated spine to which L12 dimers bind in a sequential fashion forming a multimeric L10(L12)X complex.

In terms of biological role, forms part of the ribosomal stalk, playing a central role in the interaction of the ribosome with GTP-bound translation factors. The protein is Large ribosomal subunit protein uL10 of Symbiobacterium thermophilum (strain DSM 24528 / JCM 14929 / IAM 14863 / T).